The chain runs to 100 residues: uncharacterized protein (100 aa).

Positions 65–96 (PELSKNWEKLKKEIEQKHKEIQELISEFDNMF) form a coiled coil.

This is an uncharacterized protein from Acidianus filamentous virus 2 (isolate Italy/Pozzuoli) (AFV-2).